The sequence spans 172 residues: MNYFELFGLVEGFELDTRQLAETYRQLQTQFHPDRFATAPEWEQLAAVQRAAQINDAFTTLKAPLRRAEYLLSLRGTELRGEQQTLQDTAFLMQQLEWRERLADLKGETDPERAIKDFRQEIRHDHQLLMQQLTQALATGEDPRAADCVRKLKFVDKLLEELERFEDSLFES.

Residues 2–74 (NYFELFGLVE…LRRAEYLLSL (73 aa)) form the J domain.

This sequence belongs to the HscB family. As to quaternary structure, interacts with HscA and stimulates its ATPase activity.

Functionally, co-chaperone involved in the maturation of iron-sulfur cluster-containing proteins. Seems to help targeting proteins to be folded toward HscA. The chain is Co-chaperone protein HscB homolog from Aeromonas hydrophila subsp. hydrophila (strain ATCC 7966 / DSM 30187 / BCRC 13018 / CCUG 14551 / JCM 1027 / KCTC 2358 / NCIMB 9240 / NCTC 8049).